Here is a 264-residue protein sequence, read N- to C-terminus: Leukocyte receptor cluster member 1 (264 aa).

2 disordered regions span residues 1–37 (MNILPKKSWHVRNKDNVARVRRDEAQAREEEKERERR) and 49–76 (FLRKKARHQNSLPELEAAEAGAPGSGPV). Residues 12–37 (RNKDNVARVRRDEAQAREEEKERERR) are compositionally biased toward basic and acidic residues. A coiled-coil region spans residues 16 to 46 (NVARVRRDEAQAREEEKERERRVLLAQQEAR). A Phosphoserine modification is found at S59. A compositionally biased stretch (low complexity) spans 59-75 (SLPELEAAEAGAPGSGP). Residues 89–115 (VIRGNKEYKEEKRQEKERQEKALGILT) adopt a coiled-coil conformation. A disordered region spans residues 118–264 (GQSAAEAQTQ…PRQQDPHLTH (147 aa)). Basic and acidic residues-rich tracts occupy residues 146–162 (PDEKIKSRLDPLREMQK) and 170–214 (HGGD…RSRA). The stretch at 196–222 (LDQLRAERLRREAAERSRAEALLARVQ) forms a coiled coil. S245 carries the post-translational modification Phosphoserine.

This is Leukocyte receptor cluster member 1 (LENG1) from Homo sapiens (Human).